The sequence spans 134 residues: UPF0412 protein YaaI (134 aa).

The first 23 residues, 1–23, serve as a signal peptide directing secretion; sequence MKSVFTISASLAISLMLCCTAQA.

This sequence belongs to the UPF0412 family.

The protein is UPF0412 protein YaaI of Escherichia coli O157:H7.